A 109-amino-acid polypeptide reads, in one-letter code: MKRIKSGDEVIVIAGKSKGHIGKVLRVIDDAVVVEGGNLIKKHIKPNPQKPENKGGIITREAPLHVSNVAHYNPVTKKADKVGFKYLESNGVSKKVRYYKSNNEIIDRI.

This sequence belongs to the universal ribosomal protein uL24 family. In terms of assembly, part of the 50S ribosomal subunit.

Functionally, one of two assembly initiator proteins, it binds directly to the 5'-end of the 23S rRNA, where it nucleates assembly of the 50S subunit. One of the proteins that surrounds the polypeptide exit tunnel on the outside of the subunit. This chain is Large ribosomal subunit protein uL24, found in Legionella pneumophila (strain Corby).